Reading from the N-terminus, the 672-residue chain is Ubiquitin carboxyl-terminal hydrolase 19 (672 aa).

A helical membrane pass occupies residues 11–31; sequence NSFTQLILTLFFVSIGLLYFV. Cys-64, Cys-67, Cys-75, Cys-78, Cys-84, Cys-88, His-97, and Cys-101 together coordinate Zn(2+). The MYND-type zinc-finger motif lies at 64-101; the sequence is CSVCGKATTKKCSRCKSVRYCSAACQTSDWKSGHKLKC. In terms of domain architecture, USP spans 174-480; that stretch reads CGLTNCGNSC…RAYMLLYSRV (307 aa). Cys-183 serves as the catalytic Nucleophile. The active-site Proton acceptor is the His-439. Residues 484-672 are disordered; the sequence is PSNLRSEESQ…HSDTEMIDAQ (189 aa). Residues 488 to 499 show a composition bias toward basic and acidic residues; that stretch reads RSEESQDEKKTD. The span at 500-527 shows a compositional bias: polar residues; that stretch reads TLNTESNQDGSVESSGVGTNDTSVSSLC. Composition is skewed to basic and acidic residues over residues 533-543 and 553-594; these read HSEDPEYEKES and EEGK…KEDP. The span at 606–615 shows a compositional bias: polar residues; sequence LDITTPSPSA. The span at 623–666 shows a compositional bias: basic and acidic residues; the sequence is ENERSDTESKPLEKEHSDTESNKPLEKEHLDSESKPLEKEHSDT.

Belongs to the peptidase C19 family.

It localises to the membrane. The catalysed reaction is Thiol-dependent hydrolysis of ester, thioester, amide, peptide and isopeptide bonds formed by the C-terminal Gly of ubiquitin (a 76-residue protein attached to proteins as an intracellular targeting signal).. Its function is as follows. Recognizes and hydrolyzes the peptide bond at the C-terminal Gly of ubiquitin. Involved in the processing of poly-ubiquitin precursors as well as that of ubiquitinated proteins. This Arabidopsis thaliana (Mouse-ear cress) protein is Ubiquitin carboxyl-terminal hydrolase 19 (UBP19).